A 597-amino-acid polypeptide reads, in one-letter code: MELSSGVCPATRLQEAEKAAVHKRSPKVLEALRKLNIQADQAPVIAVLGSGGGLRAHIACLGVLSELKELGLLDAVTYLAGVSGSTWALSSLYTKNGNMEGIEEELKHRYEKNEWDFHESLEKAIQASKRENYSLTDFWAYLIVSRQIRELQDSNLSSLKKQVEEGVLPYPIFAAIDEDLLADWRERKTQNSWFEFTPHHAGYPALGAYVPITEFGSRFENGKLVKSEPERDLTFLRGLWGSAFADIKEIKNYILNYFRNPFGKLKFIEGPVTYSEAPRMNVDAMLLDLVMAYFTDMNDPSIKDKLCALQQALGTETDEFGIEMAEIIQNWNETSAEKKEQFLDHLLDRFKKTQEDTTTYSLMNWNTGLVWDRCVFVNETRKCVSKWQWGTVYNFLYKHGKIADETMCSRELLHLVDAGFAINTPYPLVLPPVRETHLILSFDFSAGDPLETIRATADYCQRHEIPFPEVSEDQLKEWAKAPASCYVLRGETGPVVMHFTLFNKDNCGDDIETWRKKYGTVKLSDSYTPDLVRDLLRVSKENVKKNKINILSEMRKVAGNPGNIPRVNKEACLGDRVKDPQGSQTVEFKKSHNISKD.

The region spanning 1 to 597 is the PLA2c domain; the sequence is MELSSGVCPA…FKKSHNISKD (597 aa). The active-site Nucleophile is the Ser83. The active-site Proton acceptor is the Asp417. The segment at 576 to 597 is disordered; it reads RVKDPQGSQTVEFKKSHNISKD. The span at 587–597 shows a compositional bias: basic and acidic residues; it reads EFKKSHNISKD.

Highly expressed in ovary, where it localizes to oocytes in preantral and antral stage follicles (at protein level). Not detected in other tissues tested.

Its subcellular location is the nucleus. It localises to the nucleoplasm. The protein resides in the nucleus envelope. It is found in the cytoplasm. The protein localises to the cell cortex. Its subcellular location is the cytoskeleton. It localises to the spindle. The catalysed reaction is a 1,2-diacyl-sn-glycero-3-phosphocholine + H2O = a 1-acyl-sn-glycero-3-phosphocholine + a fatty acid + H(+). The enzyme catalyses a 1-O-alkyl-2-acyl-sn-glycero-3-phosphocholine + H2O = a 1-O-alkyl-sn-glycero-3-phosphocholine + a fatty acid + H(+). It carries out the reaction 1,2-dihexadecanoyl-sn-glycero-3-phosphocholine + H2O = 1-hexadecanoyl-sn-glycero-3-phosphocholine + hexadecanoate + H(+). It catalyses the reaction 1-hexadecanoyl-2-(9Z-octadecenoyl)-sn-glycero-3-phosphocholine + H2O = 1-hexadecanoyl-sn-glycero-3-phosphocholine + (9Z)-octadecenoate + H(+). The catalysed reaction is 1-hexadecanoyl-2-(9Z,12Z-octadecadienoyl)-sn-glycero-3-phosphocholine + H2O = (9Z,12Z)-octadecadienoate + 1-hexadecanoyl-sn-glycero-3-phosphocholine + H(+). The enzyme catalyses 1-hexadecanoyl-2-(5Z,8Z,11Z,14Z-eicosatetraenoyl)-sn-glycero-3-phosphocholine + H2O = 1-hexadecanoyl-sn-glycero-3-phosphocholine + (5Z,8Z,11Z,14Z)-eicosatetraenoate + H(+). It carries out the reaction 1-O-hexadecyl-2-(5Z,8Z,11Z,14Z)-eicosatetraenoyl-sn-glycero-3-phosphocholine + H2O = 1-O-hexadecyl-sn-glycero-3-phosphocholine + (5Z,8Z,11Z,14Z)-eicosatetraenoate + H(+). It catalyses the reaction 1-hexadecanoyl-2-(5Z,8Z,11Z,14Z-eicosatetraenoyl)-sn-glycero-3-phosphocholine + H2O = 2-(5Z,8Z,11Z,14Z)-eicosatetraenoyl-sn-glycero-3-phosphocholine + hexadecanoate + H(+). The catalysed reaction is a 1-acyl-sn-glycero-3-phosphocholine + H2O = sn-glycerol 3-phosphocholine + a fatty acid + H(+). The enzyme catalyses 1-hexadecanoyl-sn-glycero-3-phosphocholine + H2O = sn-glycerol 3-phosphocholine + hexadecanoate + H(+). It carries out the reaction 2 1-hexadecanoyl-sn-glycero-3-phosphocholine = 1,2-dihexadecanoyl-sn-glycero-3-phosphocholine + sn-glycerol 3-phosphocholine. It catalyses the reaction 1-hexadecanoyl-sn-glycero-3-phosphoethanolamine + 1-hexadecanoyl-sn-glycero-3-phosphocholine = 1,2-dihexadecanoyl-sn-glycero-3-phosphoethanolamine + sn-glycerol 3-phosphocholine. The catalysed reaction is 1-hexadecanoyl-sn-glycero-3-phosphoethanolamine + 1-hexadecanoyl-sn-glycero-3-phosphocholine = sn-glycero-3-phosphoethanolamine + 1,2-dihexadecanoyl-sn-glycero-3-phosphocholine. The enzyme catalyses 2 1-hexadecanoyl-sn-glycero-3-phosphoethanolamine = 1,2-dihexadecanoyl-sn-glycero-3-phosphoethanolamine + sn-glycero-3-phosphoethanolamine. It carries out the reaction 1-O-hexadecyl-sn-glycero-3-phosphocholine + 1-hexadecanoyl-sn-glycero-3-phosphocholine = 1-O-hexadecyl-2-hexadecanoyl-sn-glycero-3-phosphocholine + sn-glycerol 3-phosphocholine. It catalyses the reaction a 1-O-(1Z-alkenyl)-sn-glycero-3-phosphoethanolamine + 1-hexadecanoyl-sn-glycero-3-phosphocholine = 1-O-(1Z)-alkenyl-2-hexadecanoyl-sn-glycero-3-phosphoethanolamine + sn-glycerol 3-phosphocholine. The catalysed reaction is 1-O-hexadecyl-sn-glycero-3-phosphocholine + 1-hexadecanoyl-sn-glycero-3-phosphoethanolamine = 1-O-hexadecyl-2-hexadecanoyl-sn-glycero-3-phosphocholine + sn-glycero-3-phosphoethanolamine. The enzyme catalyses 1-octadecanoyl-2-(5Z,8Z,11Z,14Z)-eicosatetraenoyl-sn-glycero-3-phosphoethanolamine + 1-hexadecanoyl-sn-glycero-3-phosphocholine = 1-octadecanoyl-sn-glycero-3-phosphoethanolamine + 1-hexadecanoyl-2-(5Z,8Z,11Z,14Z-eicosatetraenoyl)-sn-glycero-3-phosphocholine. It carries out the reaction 1-octadecanoyl-2-(5Z,8Z,11Z,14Z)-eicosatetraenoyl-sn-glycero-3-phosphoethanolamine + 1-O-hexadecyl-sn-glycero-3-phosphocholine = 1-octadecanoyl-sn-glycero-3-phosphoethanolamine + 1-O-hexadecyl-2-(5Z,8Z,11Z,14Z)-eicosatetraenoyl-sn-glycero-3-phosphocholine. It catalyses the reaction 1-hexadecanoyl-2-(9Z,12Z-octadecadienoyl)-sn-glycero-3-phosphocholine + a 1-O-(1Z-alkenyl)-sn-glycero-3-phosphoethanolamine = 1-O-(1Z-alkenyl)-2-(9Z,12Z-octadecadienoyl)-sn-glycero-3-phosphoethanolamine + 1-hexadecanoyl-sn-glycero-3-phosphocholine. The catalysed reaction is 1-hexadecanoyl-2-(5Z,8Z,11Z,14Z-eicosatetraenoyl)-sn-glycero-3-phosphocholine + a 1-O-(1Z-alkenyl)-sn-glycero-3-phosphoethanolamine = 1-O-(1Z)-alkenyl-2-(5Z,8Z,11Z,14Z)-eicosatetraenoyl-sn-glycero-3-phosphoethanolamine + 1-hexadecanoyl-sn-glycero-3-phosphocholine. Functionally, calcium-independent phospholipase, lysophospholipase and O-acyltransferase involved in phospholipid remodeling. Preferentially hydrolyzes the ester bond of the fatty acyl group attached at sn-2 position of phospholipids with choline and ethanolamine head groups, producing lysophospholipids that are used in deacylation-reacylation cycles. Transfers the sn-1 fatty acyl from one lysophospholipid molecule to the sn-2 position of another lysophospholipid to form diacyl, alkylacyl and alkenylacyl glycerophospholipids. Cleaves ester bonds but not alkyl or alkenyl ether bonds at the sn-1 position of lysophospholipids. Catalyzes sn-2 fatty acyl transfer from phospholipids to the sn-2 position of 1-O-alkyl or 1-O-alkenyl lysophospholipids with lower efficiency. In Mus musculus (Mouse), this protein is Cytosolic phospholipase A2 gamma.